A 105-amino-acid chain; its full sequence is Heat shock protein HspQ (105 aa).

Residues 74–105 are disordered; sequence SSELQDERPEQPSMDELAQTIRKQRQAPRLRN. Positions 95–105 are enriched in basic residues; sequence RKQRQAPRLRN.

Belongs to the HspQ family.

It is found in the cytoplasm. In terms of biological role, involved in the degradation of certain denaturated proteins, including DnaA, during heat shock stress. This Shigella dysenteriae serotype 1 (strain Sd197) protein is Heat shock protein HspQ.